The following is a 309-amino-acid chain: Tagatose-6-phosphate kinase (309 aa).

This sequence belongs to the carbohydrate kinase PfkB family. LacC subfamily.

It catalyses the reaction D-tagatofuranose 6-phosphate + ATP = D-tagatofuranose 1,6-bisphosphate + ADP + H(+). Its pathway is carbohydrate metabolism; D-tagatose 6-phosphate degradation; D-glyceraldehyde 3-phosphate and glycerone phosphate from D-tagatose 6-phosphate: step 1/2. This Streptococcus pneumoniae (strain P1031) protein is Tagatose-6-phosphate kinase.